A 239-amino-acid polypeptide reads, in one-letter code: 1-(5-phosphoribosyl)-5-[(5-phosphoribosylamino)methylideneamino] imidazole-4-carboxamide isomerase (239 aa).

Catalysis depends on aspartate 9, which acts as the Proton acceptor. Aspartate 131 acts as the Proton donor in catalysis.

This sequence belongs to the HisA/HisF family.

Its subcellular location is the cytoplasm. It carries out the reaction 1-(5-phospho-beta-D-ribosyl)-5-[(5-phospho-beta-D-ribosylamino)methylideneamino]imidazole-4-carboxamide = 5-[(5-phospho-1-deoxy-D-ribulos-1-ylimino)methylamino]-1-(5-phospho-beta-D-ribosyl)imidazole-4-carboxamide. It participates in amino-acid biosynthesis; L-histidine biosynthesis; L-histidine from 5-phospho-alpha-D-ribose 1-diphosphate: step 4/9. This is 1-(5-phosphoribosyl)-5-[(5-phosphoribosylamino)methylideneamino] imidazole-4-carboxamide isomerase from Bacteroides thetaiotaomicron (strain ATCC 29148 / DSM 2079 / JCM 5827 / CCUG 10774 / NCTC 10582 / VPI-5482 / E50).